A 545-amino-acid polypeptide reads, in one-letter code: CTP synthase (545 aa).

Residues 1 to 266 (MATNYIFVTG…DDFVCERFRL (266 aa)) are amidoligase domain. Residue serine 14 participates in CTP binding. Serine 14 contacts UTP. Residues 15–20 (SLGKGI) and aspartate 72 each bind ATP. 2 residues coordinate Mg(2+): aspartate 72 and glutamate 140. Residues 147-149 (DIE), 187-192 (KTKPTQ), and lysine 223 each bind CTP. Residues 187-192 (KTKPTQ) and lysine 223 contribute to the UTP site. 239–241 (KDV) contributes to the ATP binding site. The Glutamine amidotransferase type-1 domain occupies 291-542 (TIGMVGKYTE…VKAAYENHKK (252 aa)). Position 352 (glycine 352) interacts with L-glutamine. Cysteine 379 acts as the Nucleophile; for glutamine hydrolysis in catalysis. L-glutamine contacts are provided by residues 380 to 383 (LGMQ), glutamate 403, and arginine 470. Active-site residues include histidine 515 and glutamate 517.

This sequence belongs to the CTP synthase family. Homotetramer.

The catalysed reaction is UTP + L-glutamine + ATP + H2O = CTP + L-glutamate + ADP + phosphate + 2 H(+). It carries out the reaction L-glutamine + H2O = L-glutamate + NH4(+). It catalyses the reaction UTP + NH4(+) + ATP = CTP + ADP + phosphate + 2 H(+). It functions in the pathway pyrimidine metabolism; CTP biosynthesis via de novo pathway; CTP from UDP: step 2/2. Its activity is regulated as follows. Allosterically activated by GTP, when glutamine is the substrate; GTP has no effect on the reaction when ammonia is the substrate. The allosteric effector GTP functions by stabilizing the protein conformation that binds the tetrahedral intermediate(s) formed during glutamine hydrolysis. Inhibited by the product CTP, via allosteric rather than competitive inhibition. In terms of biological role, catalyzes the ATP-dependent amination of UTP to CTP with either L-glutamine or ammonia as the source of nitrogen. Regulates intracellular CTP levels through interactions with the four ribonucleotide triphosphates. This chain is CTP synthase, found in Haemophilus influenzae (strain PittEE).